Here is a 180-residue protein sequence, read N- to C-terminus: Crossover junction endodeoxyribonuclease RuvC (180 aa).

Catalysis depends on residues Asp-7, Glu-66, and Asp-138. 3 residues coordinate Mg(2+): Asp-7, Glu-66, and Asp-138.

Belongs to the RuvC family. As to quaternary structure, homodimer which binds Holliday junction (HJ) DNA. The HJ becomes 2-fold symmetrical on binding to RuvC with unstacked arms; it has a different conformation from HJ DNA in complex with RuvA. In the full resolvosome a probable DNA-RuvA(4)-RuvB(12)-RuvC(2) complex forms which resolves the HJ. Requires Mg(2+) as cofactor.

It localises to the cytoplasm. It carries out the reaction Endonucleolytic cleavage at a junction such as a reciprocal single-stranded crossover between two homologous DNA duplexes (Holliday junction).. Its function is as follows. The RuvA-RuvB-RuvC complex processes Holliday junction (HJ) DNA during genetic recombination and DNA repair. Endonuclease that resolves HJ intermediates. Cleaves cruciform DNA by making single-stranded nicks across the HJ at symmetrical positions within the homologous arms, yielding a 5'-phosphate and a 3'-hydroxyl group; requires a central core of homology in the junction. The consensus cleavage sequence is 5'-(A/T)TT(C/G)-3'. Cleavage occurs on the 3'-side of the TT dinucleotide at the point of strand exchange. HJ branch migration catalyzed by RuvA-RuvB allows RuvC to scan DNA until it finds its consensus sequence, where it cleaves and resolves the cruciform DNA. The chain is Crossover junction endodeoxyribonuclease RuvC from Paraburkholderia phytofirmans (strain DSM 17436 / LMG 22146 / PsJN) (Burkholderia phytofirmans).